Here is a 246-residue protein sequence, read N- to C-terminus: Mediator of RNA polymerase II transcription subunit 6 (246 aa).

2 disordered regions span residues 165–186 (MKKK…RSTN) and 207–246 (EALE…ATTK). 2 stretches are compositionally biased toward basic and acidic residues: residues 166–184 (KKKE…EERS) and 208–224 (ALEK…KPEE).

It belongs to the Mediator complex subunit 6 family. In terms of assembly, component of the Mediator complex. Interacts with let-19/mdt-13. Interacts with RNA polymerase II. Interacts with mdt-28.

The protein localises to the nucleus. In terms of biological role, component of the Mediator complex, a coactivator involved in the regulated transcription of nearly all RNA polymerase II-dependent genes. Mediator functions as a bridge to convey information from gene-specific regulatory proteins to the basal RNA polymerase II transcription machinery. Mediator is recruited to promoters by direct interactions with regulatory proteins and serves as a scaffold for the assembly of a functional preinitiation complex with RNA polymerase II and the general transcription factors. In Caenorhabditis briggsae, this protein is Mediator of RNA polymerase II transcription subunit 6 (mdt-6).